The chain runs to 390 residues: Mevalonate kinase (390 aa).

ATP is bound by residues Lys16, Ser130, and 135 to 141 (GAGLGSS). Mg(2+)-binding residues include Ser141 and Glu193. Asp204 (proton acceptor) is an active-site residue.

This sequence belongs to the GHMP kinase family. Mevalonate kinase subfamily. It depends on Mg(2+) as a cofactor.

The protein localises to the cytoplasm. It carries out the reaction (R)-mevalonate + ATP = (R)-5-phosphomevalonate + ADP + H(+). The protein operates within isoprenoid biosynthesis; isopentenyl diphosphate biosynthesis via mevalonate pathway; isopentenyl diphosphate from (R)-mevalonate: step 1/3. In terms of biological role, catalyzes the phosphorylation of mevalonate to mevalonate 5-phosphate, a key step in isoprenoid biosynthesis. This is Mevalonate kinase from Dictyostelium discoideum (Social amoeba).